A 116-amino-acid chain; its full sequence is Large ribosomal subunit protein bL17 (116 aa).

The protein belongs to the bacterial ribosomal protein bL17 family. As to quaternary structure, part of the 50S ribosomal subunit. Contacts protein L32.

The protein is Large ribosomal subunit protein bL17 of Aliarcobacter butzleri (strain RM4018) (Arcobacter butzleri).